Here is a 496-residue protein sequence, read N- to C-terminus: Glutamyl-tRNA(Gln) amidotransferase subunit A (496 aa).

Residues K75 and S150 each act as charge relay system in the active site. S174 functions as the Acyl-ester intermediate in the catalytic mechanism.

Belongs to the amidase family. GatA subfamily. Heterotrimer of A, B and C subunits.

It carries out the reaction L-glutamyl-tRNA(Gln) + L-glutamine + ATP + H2O = L-glutaminyl-tRNA(Gln) + L-glutamate + ADP + phosphate + H(+). Allows the formation of correctly charged Gln-tRNA(Gln) through the transamidation of misacylated Glu-tRNA(Gln) in organisms which lack glutaminyl-tRNA synthetase. The reaction takes place in the presence of glutamine and ATP through an activated gamma-phospho-Glu-tRNA(Gln). The chain is Glutamyl-tRNA(Gln) amidotransferase subunit A from Burkholderia mallei (strain NCTC 10247).